Reading from the N-terminus, the 89-residue chain is Small ribosomal subunit protein uS14A (89 aa).

This sequence belongs to the universal ribosomal protein uS14 family. In terms of assembly, part of the 30S ribosomal subunit. Contacts proteins S3 and S10.

In terms of biological role, binds 16S rRNA, required for the assembly of 30S particles and may also be responsible for determining the conformation of the 16S rRNA at the A site. The sequence is that of Small ribosomal subunit protein uS14A from Bacillus licheniformis (strain ATCC 14580 / DSM 13 / JCM 2505 / CCUG 7422 / NBRC 12200 / NCIMB 9375 / NCTC 10341 / NRRL NRS-1264 / Gibson 46).